Reading from the N-terminus, the 818-residue chain is uncharacterized protein (818 aa).

Low complexity-rich tracts occupy residues 1-33 (MYNN…NYIS), 44-68 (NNFL…PQQQ), and 97-150 (NNSN…TKSN). Disordered stretches follow at residues 1 to 68 (MYNN…PQQQ), 92 to 150 (LNTG…TKSN), 164 to 220 (KLDN…KYHE), 284 to 306 (NMNG…NNSD), and 415 to 445 (NINK…NNNN). 2 stretches are compositionally biased toward acidic residues: residues 172-190 (SEEE…EEKE) and 205-214 (DNNSQDEDKE). Residues 284-302 (NMNGSSDSSDSSNSSGHSR) show a composition bias toward low complexity. A helical transmembrane segment spans residues 534 to 554 (IIAIIVIVWPLIANLTYKFIV). Residues 779–808 (ANNFMSDSNRSPSSSSSSSSSTSDSENGML) form a disordered region. The span at 784–803 (SDSNRSPSSSSSSSSSTSDS) shows a compositional bias: low complexity.

The protein resides in the membrane. This is an uncharacterized protein from Dictyostelium discoideum (Social amoeba).